The chain runs to 257 residues: N-acetylglucosaminyldiphosphoundecaprenol N-acetyl-beta-D-mannosaminyltransferase (257 aa).

The protein belongs to the glycosyltransferase 26 family. TagA/TarA subfamily.

The catalysed reaction is UDP-N-acetyl-alpha-D-mannosamine + N-acetyl-alpha-D-glucosaminyl-di-trans,octa-cis-undecaprenyl diphosphate = N-acetyl-beta-D-mannosaminyl-(1-&gt;4)-N-acetyl-alpha-D-glucosaminyl di-trans,octa-cis-undecaprenyl diphosphate + UDP + H(+). The protein operates within cell wall biogenesis; poly(ribitol phosphate) teichoic acid biosynthesis. Catalyzes the conversion of GlcNAc-PP-undecaprenol into ManNAc-GlcNAc-PP-undecaprenol, the first committed lipid intermediate in the de novo synthesis of teichoic acid. The chain is N-acetylglucosaminyldiphosphoundecaprenol N-acetyl-beta-D-mannosaminyltransferase from Bacillus spizizenii (strain ATCC 23059 / NRRL B-14472 / W23) (Bacillus subtilis subsp. spizizenii).